The sequence spans 395 residues: Bifunctional fatty acid conjugase/Delta(12)-oleate desaturase (395 aa).

2 helical membrane passes run 73 to 93 (FALAFLFYHSAVTYIPLLPKP) and 97 to 117 (MAWPVYWFLQGSNMLGIWVIA). Residues 118-122 (HECGH) carry the Histidine box-1 motif. Residues 130 to 150 (WVNDAVGFFLHTSLLVPYFPF) form a helical membrane-spanning segment. Positions 154–158 (HRRHH) match the Histidine box-2 motif. Helical transmembrane passes span 192–212 (VLTLTLTLLVGWPSYLAFNAS), 236–256 (FWVHVSNIGILAIYYILYRLA), and 264–284 (LLSIYGVPVLILNAFVVLITF). Positions 328-332 (HVIHH) match the Histidine box-3 motif.

This sequence belongs to the fatty acid desaturase type 1 family.

It is found in the membrane. It carries out the reaction a (9Z,12Z)-octadecadienoyl-containing glycerolipid + 2 Fe(II)-[cytochrome b5] + O2 + 2 H(+) = a (9Z,11E,13Z)-octadeca-9,11,13-trienoyl-containing glycerolipid + 2 Fe(III)-[cytochrome b5] + 2 H2O. It functions in the pathway lipid metabolism; polyunsaturated fatty acid biosynthesis. In terms of biological role, converts a single cis double bond at position 12 of linoleate incorporated into phosphatidylcholine into conjugated 11-trans and 13-cis double bonds. Produces punicic acid (18:3(9Z,11E,13Z)) from linoleic acid and conjugated octadecatetraenoic fatty acid from gamma-linolenic acid. No activity with cis- and trans-vaccenic acid, alpha-linolenic acid or homo-gamma-linolenic acid. 16:2(9Z,12Z), 18:3(9Z,12Z,15Z) and 18:2(9Z,12Z) are substrates for the conjugase to form trans-Delta(11) and cis-Delta(13) double bonds. No activity on the cis-Delta(9) double bonds of oleic and palmitoleic acids. The polypeptide is Bifunctional fatty acid conjugase/Delta(12)-oleate desaturase (Punica granatum (Pomegranate)).